The sequence spans 79 residues: Exodeoxyribonuclease 7 small subunit (79 aa).

This sequence belongs to the XseB family. As to quaternary structure, heterooligomer composed of large and small subunits.

The protein localises to the cytoplasm. It carries out the reaction Exonucleolytic cleavage in either 5'- to 3'- or 3'- to 5'-direction to yield nucleoside 5'-phosphates.. In terms of biological role, bidirectionally degrades single-stranded DNA into large acid-insoluble oligonucleotides, which are then degraded further into small acid-soluble oligonucleotides. The protein is Exodeoxyribonuclease 7 small subunit of Shouchella clausii (strain KSM-K16) (Alkalihalobacillus clausii).